A 119-amino-acid polypeptide reads, in one-letter code: Large ribosomal subunit protein uL18 (119 aa).

This sequence belongs to the universal ribosomal protein uL18 family. In terms of assembly, part of the 50S ribosomal subunit; part of the 5S rRNA/L5/L18/L25 subcomplex. Contacts the 5S and 23S rRNAs.

This is one of the proteins that bind and probably mediate the attachment of the 5S RNA into the large ribosomal subunit, where it forms part of the central protuberance. The chain is Large ribosomal subunit protein uL18 from Cereibacter sphaeroides (strain ATCC 17029 / ATH 2.4.9) (Rhodobacter sphaeroides).